Here is an 833-residue protein sequence, read N- to C-terminus: AdoMet-dependent rRNA methyltransferase SPB1 (833 aa).

S-adenosyl-L-methionine contacts are provided by G59, W61, D79, D95, and D120. K160 acts as the Proton acceptor in catalysis. Coiled coils occupy residues 348–389 (EEEQ…QLNM) and 453–481 (RDEL…SERD). Positions 477-493 (KSERDAKFRAKQARESS) are enriched in basic and acidic residues. Disordered stretches follow at residues 477–532 (KSER…SDDD), 592–645 (KRKL…EKHS), and 776–810 (VTKK…GKYK). Composition is skewed to acidic residues over residues 505–532 (QSDE…SDDD) and 622–634 (EDGD…DSEE). The span at 635 to 645 (EAKRTKQEKHS) shows a compositional bias: basic and acidic residues. Residues 730–782 (AEAKARKKHRAVARLEKLKKKAGLINDDSDKSEKDKAEEIAKLMRKVTKKAKQ) are a coiled coil.

It belongs to the class I-like SAM-binding methyltransferase superfamily. RNA methyltransferase RlmE family. SPB1 subfamily. Component of the nucleolar and nucleoplasmic pre-60S ribosomal particle.

It localises to the nucleus. The protein resides in the nucleolus. The enzyme catalyses a ribonucleotide in rRNA + S-adenosyl-L-methionine = a 2'-O-methylribonucleotide in rRNA + S-adenosyl-L-homocysteine + H(+). In terms of biological role, required for proper assembly of pre-ribosomal particles during the biogenesis of the 60S ribosomal subunit. The protein is AdoMet-dependent rRNA methyltransferase SPB1 of Kluyveromyces lactis (strain ATCC 8585 / CBS 2359 / DSM 70799 / NBRC 1267 / NRRL Y-1140 / WM37) (Yeast).